The sequence spans 389 residues: Chalcone synthase E (389 aa).

Residue cysteine 164 is part of the active site.

Belongs to the thiolase-like superfamily. Chalcone/stilbene synthases family.

The catalysed reaction is (E)-4-coumaroyl-CoA + 3 malonyl-CoA + 3 H(+) = 2',4,4',6'-tetrahydroxychalcone + 3 CO2 + 4 CoA. It functions in the pathway secondary metabolite biosynthesis; flavonoid biosynthesis. In terms of biological role, the primary product of this enzyme is 4,2',4',6'-tetrahydroxychalcone (also termed naringenin-chalcone or chalcone) which can under specific conditions spontaneously isomerize into naringenin. The protein is Chalcone synthase E (CHSE) of Ipomoea nil (Japanese morning glory).